We begin with the raw amino-acid sequence, 117 residues long: Ribonuclease P protein component (117 aa).

This sequence belongs to the RnpA family. Consists of a catalytic RNA component (M1 or rnpB) and a protein subunit.

The enzyme catalyses Endonucleolytic cleavage of RNA, removing 5'-extranucleotides from tRNA precursor.. RNaseP catalyzes the removal of the 5'-leader sequence from pre-tRNA to produce the mature 5'-terminus. It can also cleave other RNA substrates such as 4.5S RNA. The protein component plays an auxiliary but essential role in vivo by binding to the 5'-leader sequence and broadening the substrate specificity of the ribozyme. The chain is Ribonuclease P protein component from Aliivibrio salmonicida (strain LFI1238) (Vibrio salmonicida (strain LFI1238)).